Consider the following 308-residue polypeptide: Probable manganese-dependent inorganic pyrophosphatase (308 aa).

Mn(2+) contacts are provided by His9, Asp13, Asp15, Asp74, His96, and Asp148.

This sequence belongs to the PPase class C family. The cofactor is Mn(2+).

It is found in the cytoplasm. It carries out the reaction diphosphate + H2O = 2 phosphate + H(+). In Oceanobacillus iheyensis (strain DSM 14371 / CIP 107618 / JCM 11309 / KCTC 3954 / HTE831), this protein is Probable manganese-dependent inorganic pyrophosphatase.